The following is a 503-amino-acid chain: Cytochrome P450 3A13 (503 aa).

Cys442 lines the heme pocket.

The protein belongs to the cytochrome P450 family. The cofactor is heme.

It localises to the endoplasmic reticulum membrane. Its subcellular location is the microsome membrane. The enzyme catalyses an organic molecule + reduced [NADPH--hemoprotein reductase] + O2 = an alcohol + oxidized [NADPH--hemoprotein reductase] + H2O + H(+). Can activate aflatoxin B1 to a genotoxic product. The sequence is that of Cytochrome P450 3A13 (Cyp3a13) from Mus musculus (Mouse).